A 758-amino-acid chain; its full sequence is Ribosomal RNA processing protein 1 homolog B (758 aa).

S245 bears the Phosphoserine mark. Residues 259 to 272 show a composition bias toward basic residues; sequence AVSKKKTALGKNHS. The segment at 259 to 285 is disordered; the sequence is AVSKKKTALGKNHSRKDGLSDERGRDD. The span at 273-285 shows a compositional bias: basic and acidic residues; the sequence is RKDGLSDERGRDD. Residues S350, S392, S394, and S395 each carry the phosphoserine modification. The tract at residues 381–598 is disordered; that stretch reads GSRVFCVEEE…KTASLKKRKK (218 aa). Residues 397 to 408 are compositionally biased toward basic residues; the sequence is QKRRRKKKKKHH. Low complexity predominate over residues 447–457; that stretch reads GAEATSSTGEE. S452 and S458 each carry phosphoserine. A compositionally biased stretch (basic residues) spans 469 to 481; that stretch reads HNKRKRPRKKSPR. The span at 498–513 shows a compositional bias: low complexity; the sequence is SQSGPSGSHPQGPRGS. Position 513 is a phosphoserine (S513). Positions 566 to 575 are enriched in basic residues; it reads QRRRLQKKKA. S579 bears the Phosphoserine mark. An N6-acetyllysine modification is found at K652. A disordered region spans residues 660-681; it reads KSSTATHPPGPAVQLNKTPSSS. A phosphoserine mark is found at S702 and S706. A disordered region spans residues 707-758; that stretch reads PTGPSRVAFDPEQKPLHGVLKTPTSSPASSPLVAKKPLTTTPRRRPRAMDFF. R712 bears the Citrulline mark. The residue at position 728 (T728) is a Phosphothreonine. S732, S735, and S736 each carry phosphoserine.

The protein belongs to the RRP1 family. In terms of assembly, interacts with the transcriptional activator E2F1. Interacts with serine/threonine-protein phosphatase PP1 subunits PPP1CB and PPP1CC but not with PPP1CA. Interacts with 60S ribosomal proteins RPL5 and RPL27, ribosomal processing protein RRP1/NNP1 and other nucleolar proteins including NOP2/NOL1 and FBL. Also interacts with nucleolar protein NPM1/B23. Interacts with splicing factor SRSF1 and with LUC7L3/CROP. Interacts with GTPase activator SIPA1. Interacts with CBX5/HP1alpha, H1-10, NCL, PARP1, TRIM28 and YBX3. (Microbial infection) Interacts with influenza A virus nucleoprotein NP and with RNA-directed RNA polymerase subunits PB1 and PB2. Post-translationally, citrullinated by PADI4.

It is found in the nucleus. The protein localises to the nucleolus. It localises to the nucleoplasm. Its subcellular location is the chromosome. Positively regulates DNA damage-induced apoptosis by acting as a transcriptional coactivator of proapoptotic target genes of the transcriptional activator E2F1. Likely to play a role in ribosome biogenesis by targeting serine/threonine protein phosphatase PP1 to the nucleolus. Involved in regulation of mRNA splicing. Inhibits SIPA1 GTPase activity. Involved in regulating expression of extracellular matrix genes. Associates with chromatin and may play a role in modulating chromatin structure. Its function is as follows. (Microbial infection) Following influenza A virus (IAV) infection, promotes viral mRNA transcription by facilitating the binding of IAV RNA-directed RNA polymerase to capped mRNA. The polypeptide is Ribosomal RNA processing protein 1 homolog B (RRP1B) (Homo sapiens (Human)).